A 168-amino-acid chain; its full sequence is Cysteine-rich perinuclear theca protein 1 (168 aa).

The interval 144–168 (NVSDPEEVPPCLDSDPFPNGDLASS) is disordered.

As to expression, specifically expressed in spermatozoa (at protein level). Detected from the elongated spermatid stage onwards; not found in immature germ cells or somatic cells (at protein level).

Its subcellular location is the cytoplasm. It is found in the cytoskeleton. The protein localises to the perinuclear theca. In Mus musculus (Mouse), this protein is Cysteine-rich perinuclear theca protein 1.